We begin with the raw amino-acid sequence, 199 residues long: MIQISDKAQTYFRKLIEREGVPGMGVRLSAVDAGTPRADAKLEFAEPADLSGDEWAIDCDGFTLYVVAASVPWMDGAEIDYVTQSTGNQQLTIKAPKIKGEAPAESASMVERVRWVVENEINPQLASHGGRVAVQEVSAEGVVLLRFGGGCHGCGMADVTLKQGIEKTLMGRLPGVIAVRDATDHATGDAPYIPRDSAA.

Cysteine 151 and cysteine 154 together coordinate [4Fe-4S] cluster.

Belongs to the NfuA family. In terms of assembly, homodimer. [4Fe-4S] cluster serves as cofactor.

In terms of biological role, involved in iron-sulfur cluster biogenesis. Binds a 4Fe-4S cluster, can transfer this cluster to apoproteins, and thereby intervenes in the maturation of Fe/S proteins. Could also act as a scaffold/chaperone for damaged Fe/S proteins. The sequence is that of Fe/S biogenesis protein NfuA from Xanthomonas campestris pv. campestris (strain 8004).